The following is a 747-amino-acid chain: Putative ankyrin repeat protein FPV222 (747 aa).

ANK repeat units follow at residues 38 to 67 (DNCTMLYTAVEHRYIDIIKLLLDHGADPNI), 103 to 132 (NYRNTFFVYNENRNLEIAKMLIQNGALVNM), 136 to 165 (KNITPLHIASSSGSYKMVELLLLHGANTNA), 169 to 198 (YGETSLHYSVSSNDLNISELLIENGTNVNV), 202 to 231 (DSITALIIAVEIMSIDLVRLLLDKGADTNA), 234 to 263 (LERFKLYVTETKQNNNILKYLNTNNVNTNV), 294 to 323 (PCTVPVTLATRKGSKELLEILLEYGCNPDI), 328 to 357 (TSTYAMHYAVIRKHYEMLNILIRYDAYTDV), 361 to 393 (QQNTPAHYAVKLPISESCKYLKLLKLAGASFNL), 397 to 426 (KGRTPLHTACKYNNTEAVKYLIESGCDTNI), 430 to 460 (MSFTPLNYAVYYEREDTVKILLESGCVDPNL), 464 to 493 (KEVSPIIQAIKRNNKNIIKMLLNAGIDIKP), 495 to 524 (NECYGLHMLAALHNKDLLKWLLCTISELEV), and 529 to 559 (DHYVPLASYVAELSDIRIMEILIEKGLDLNK).

The protein is Putative ankyrin repeat protein FPV222 of Vertebrata (FPV).